The primary structure comprises 368 residues: Quinolinate synthase (368 aa).

The iminosuccinate site is built by His-46 and Ser-63. Cys-110 provides a ligand contact to [4Fe-4S] cluster. Iminosuccinate-binding positions include 141–143 and Ser-162; that span reads YVN. Residue Cys-230 participates in [4Fe-4S] cluster binding. Residues 256 to 258 and Thr-273 each bind iminosuccinate; that span reads HPE. A [4Fe-4S] cluster-binding site is contributed by Cys-320.

This sequence belongs to the quinolinate synthase family. Type 3 subfamily. [4Fe-4S] cluster serves as cofactor.

It is found in the cytoplasm. It carries out the reaction iminosuccinate + dihydroxyacetone phosphate = quinolinate + phosphate + 2 H2O + H(+). It functions in the pathway cofactor biosynthesis; NAD(+) biosynthesis; quinolinate from iminoaspartate: step 1/1. Catalyzes the condensation of iminoaspartate with dihydroxyacetone phosphate to form quinolinate. The sequence is that of Quinolinate synthase from Bacillus cereus (strain ATCC 10987 / NRS 248).